Consider the following 216-residue polypeptide: Putative transmembrane protein RNF32-DT (216 aa).

A helical membrane pass occupies residues 177 to 197 (WIPLLLVAGCVSCFVGLAVCV).

As to expression, expressed only in testis.

It is found in the cytoplasm. The protein localises to the membrane. The sequence is that of Putative transmembrane protein RNF32-DT from Homo sapiens (Human).